The primary structure comprises 996 residues: P3N-PIPO polyprotein (996 aa).

Residues Val173 to Tyr313 enclose the Peptidase S30 domain. Catalysis depends on for P1 proteinase activity residues His226, Glu235, and Ser267. The Involved in interaction with stylet and aphid transmission motif lies at Lys365–Cys368. Positions Pro621 to Lys623 match the Involved in virions binding and aphid transmission motif. In terms of domain architecture, Peptidase C6 spans Met647–Gly769. Active-site for helper component proteinase activity residues include Cys655 and His728.

The protein belongs to the potyviridae P3N-PIPO polyprotein family. In terms of assembly, interacts (via PIPO domain) with host PCaP1 protein; this interaction may help to anchor the movement complex to the plasma membrane from which the complex could move to the plasmodesmata. Post-translationally, potyviral RNA is expressed as two polyproteins which undergo post-translational proteolytic processing. Genome polyprotein is processed by NIa-pro, P1 and HC-pro proteinases resulting in the production of at least ten individual proteins. P3N-PIPO is cleaved by P1 and HC-pro proteinases resulting in the production of three individual proteins. The P1 proteinase and the HC-pro cleave only their respective C-termini autocatalytically.

Its subcellular location is the host cell junction. It localises to the host plasmodesma. It catalyses the reaction Hydrolyzes a Gly-|-Gly bond at its own C-terminus, commonly in the sequence -Tyr-Xaa-Val-Gly-|-Gly, in the processing of the potyviral polyprotein.. In terms of biological role, required for aphid transmission and also has proteolytic activity. Only cleaves a Gly-Gly dipeptide at its own C-terminus. Interacts with virions and aphid stylets. Acts as a suppressor of RNA-mediated gene silencing, also known as post-transcriptional gene silencing (PTGS), a mechanism of plant viral defense that limits the accumulation of viral RNAs. May have RNA-binding activity. Functionally, allows efficient cell to cell propagation, by bypassing the host cell wall barrier. Transports viral genome to neighboring plant cells directly through plasmosdesmata, without any budding. The polypeptide is P3N-PIPO polyprotein (Zucchini yellow mosaic virus (strain Reunion Island) (ZYMV)).